The chain runs to 296 residues: Glycine--tRNA ligase alpha subunit (296 aa).

Belongs to the class-II aminoacyl-tRNA synthetase family. In terms of assembly, tetramer of two alpha and two beta subunits.

It localises to the cytoplasm. The catalysed reaction is tRNA(Gly) + glycine + ATP = glycyl-tRNA(Gly) + AMP + diphosphate. In Francisella tularensis subsp. novicida (strain U112), this protein is Glycine--tRNA ligase alpha subunit.